Reading from the N-terminus, the 488-residue chain is Argininosuccinate lyase 2 (488 aa).

Belongs to the lyase 1 family. Argininosuccinate lyase subfamily.

The protein localises to the cytoplasm. The enzyme catalyses 2-(N(omega)-L-arginino)succinate = fumarate + L-arginine. It participates in amino-acid biosynthesis; L-arginine biosynthesis; L-arginine from L-ornithine and carbamoyl phosphate: step 3/3. The chain is Argininosuccinate lyase 2 from Rhizobium meliloti (strain 1021) (Ensifer meliloti).